The primary structure comprises 437 residues: Vacuolar cation/proton exchanger 2 (437 aa).

The disordered stretch occupies residues 1-29 (MMGAEKAEGMEELELEEGGGSPSPSPMTA). Topologically, residues 1–65 (MMGAEKAEGM…KWRRALTSVR (65 aa)) are cytoplasmic. A helical membrane pass occupies residues 66–86 (VVILQAKINVLLPFGPLAVML). Topologically, residues 87-88 (HY) are extracellular. A helical membrane pass occupies residues 89 to 109 (LSANHQGWVFLFSLIGITPLA). Topologically, residues 110–126 (ERLGYATEQLALYTGPT) are cytoplasmic. The chain crosses the membrane as a helical span at residues 127–147 (IGGLLNATFGNATEMIISLYA). Positions 136 to 171 (GNATEMIISLYALKNGMIRVVQQSLLGSILSNMLLV) are cation selection. Over 148-161 (LKNGMIRVVQQSLL) the chain is Extracellular. A helical membrane pass occupies residues 162 to 182 (GSILSNMLLVLGCAFFAGGLV). Over 183–194 (HPSRDQVFNKAS) the chain is Cytoplasmic. Residues 195–215 (AVVNSGLLLMAVLGLMFPAVL) form a helical membrane-spanning segment. Over 216–228 (HFTHSEVQYGKSE) the chain is Extracellular. Residues 229-249 (VSLSRFSSCIMLVAYASYLFF) form a helical membrane-spanning segment. The Cytoplasmic segment spans residues 250 to 281 (QLKSQRSLYSPIGEQEEEVTEDEEEEKEITQG). A helical transmembrane segment spans residues 282–302 (EAICWLFVLTIWISILSGYLV). The Extracellular segment spans residues 303 to 310 (DAIQGASE). Residues 311-331 (SLNMPVAFISVILLPIVGNAA) form a helical membrane-spanning segment. Residues 328 to 363 (GNAAEHASAIMFAMKDKLDITLGVAIGSSTQISMFV) are cation selection. At 332-352 (EHASAIMFAMKDKLDITLGVA) the chain is on the cytoplasmic side. The chain crosses the membrane as a helical span at residues 353-373 (IGSSTQISMFVIPFCVVIGWI). Residues 374–379 (MGQQMD) lie on the Extracellular side of the membrane. A helical membrane pass occupies residues 380-400 (LNFQLFETATLFITVLVVAFM). Topologically, residues 401-408 (LQEGTSNY) are cytoplasmic. The helical transmembrane segment at 409 to 429 (FKGLMLILCYLIVAASFFVHV) threads the bilayer. Residues 430–437 (DPDSSNNK) are Extracellular-facing.

The protein belongs to the Ca(2+):cation antiporter (CaCA) (TC 2.A.19) family. Cation/proton exchanger (CAX) subfamily. As to expression, expressed in roots and shoots.

It localises to the vacuole membrane. Vacuolar cation/proton exchanger (CAX). Translocates Ca(2+) and other metal ions into vacuoles using the proton gradient formed by H(+)-ATPase and H(+)-pyrophosphatase. The polypeptide is Vacuolar cation/proton exchanger 2 (CAX2) (Oryza sativa subsp. japonica (Rice)).